The sequence spans 154 residues: 17 kDa A-type inclusion protein (154 aa).

Residues 17–85 (QKDCSDKLDR…YKRELERDRY (69 aa)) are a coiled coil. The interval 88-154 (SRYLTSSSDP…DVEPEHPPAF (67 aa)) is disordered.

This Bos taurus (Bovine) protein is 17 kDa A-type inclusion protein.